We begin with the raw amino-acid sequence, 289 residues long: Bidirectional sugar transporter SWEET10 (289 aa).

The Extracellular portion of the chain corresponds to Met1–Gln5. The helical transmembrane segment at Ala6–Ala26 threads the bilayer. In terms of domain architecture, MtN3/slv 1 spans Val11–Lys96. Residues Pro27–Tyr43 are Cytoplasmic-facing. A helical membrane pass occupies residues Gln44 to Ile64. Topologically, residues Lys65 to Met70 are extracellular. A helical membrane pass occupies residues Leu71–Phe91. Topologically, residues Tyr92–Lys103 are cytoplasmic. A helical membrane pass occupies residues Phe104–Ile124. At His125 to Gln131 the chain is on the extracellular side. The MtN3/slv 2 domain maps to Gln131 to Lys214. A helical transmembrane segment spans residues Val132–Ile152. Residues Arg153–Pro165 are Cytoplasmic-facing. A helical membrane pass occupies residues Phe166–Leu186. Over Lys187 to Asn190 the chain is Extracellular. The helical transmembrane segment at Ile191–Ile211 threads the bilayer. Over Tyr212–Asn289 the chain is Cytoplasmic.

This sequence belongs to the SWEET sugar transporter family. Forms heterooligomers with SWEET8.

The protein localises to the cell membrane. Mediates both low-affinity uptake and efflux of sugar across the plasma membrane. This is Bidirectional sugar transporter SWEET10 from Arabidopsis thaliana (Mouse-ear cress).